A 503-amino-acid polypeptide reads, in one-letter code: Cytochrome P450 3A17 (503 aa).

Cys442 contributes to the heme binding site.

This sequence belongs to the cytochrome P450 family. Heme is required as a cofactor.

The protein localises to the endoplasmic reticulum membrane. Its subcellular location is the microsome membrane. It catalyses the reaction an organic molecule + reduced [NADPH--hemoprotein reductase] + O2 = an alcohol + oxidized [NADPH--hemoprotein reductase] + H2O + H(+). Functionally, cytochromes P450 are a group of heme-thiolate monooxygenases. In liver microsomes, this enzyme is involved in an NADPH-dependent electron transport pathway. It oxidizes a variety of structurally unrelated compounds, including steroids, fatty acids, and xenobiotics. The protein is Cytochrome P450 3A17 (CYP3A17) of Cavia porcellus (Guinea pig).